Here is a 280-residue protein sequence, read N- to C-terminus: NAD-capped RNA hydrolase NudC (280 aa).

R83 serves as a coordination point for substrate. Zn(2+) is bound by residues C113, C116, C131, and C134. A substrate-binding site is contributed by Y139. In terms of domain architecture, Nudix hydrolase spans 140 to 268 (PRVAPAIIVL…ASRRLLDDAL (129 aa)). A177, E193, and E197 together coordinate a divalent metal cation. Positions 178-199 (GFVEPSETLEAAVHREVGEEVG) match the Nudix box motif. 211–218 (QPWPFPHS) is a binding site for substrate. E238 contributes to the a divalent metal cation binding site.

It belongs to the Nudix hydrolase family. NudC subfamily. Homodimer. Mg(2+) serves as cofactor. The cofactor is Mn(2+). Requires Zn(2+) as cofactor.

It carries out the reaction a 5'-end NAD(+)-phospho-ribonucleoside in mRNA + H2O = a 5'-end phospho-adenosine-phospho-ribonucleoside in mRNA + beta-nicotinamide D-ribonucleotide + 2 H(+). The enzyme catalyses NAD(+) + H2O = beta-nicotinamide D-ribonucleotide + AMP + 2 H(+). The catalysed reaction is NADH + H2O = reduced beta-nicotinamide D-ribonucleotide + AMP + 2 H(+). MRNA decapping enzyme that specifically removes the nicotinamide adenine dinucleotide (NAD) cap from a subset of mRNAs by hydrolyzing the diphosphate linkage to produce nicotinamide mononucleotide (NMN) and 5' monophosphate mRNA. The NAD-cap is present at the 5'-end of some mRNAs and stabilizes RNA against 5'-processing. Has preference for mRNAs with a 5'-end purine. Catalyzes the hydrolysis of a broad range of dinucleotide pyrophosphates. The polypeptide is NAD-capped RNA hydrolase NudC (Deinococcus radiodurans (strain ATCC 13939 / DSM 20539 / JCM 16871 / CCUG 27074 / LMG 4051 / NBRC 15346 / NCIMB 9279 / VKM B-1422 / R1)).